A 240-amino-acid chain; its full sequence is Tetrahydromethanopterin S-methyltransferase subunit A (240 aa).

Residues M1–S216 lie on the Cytoplasmic side of the membrane. H85 serves as a coordination point for 5-hydroxybenzimidazolylcob(I)amide. A helical transmembrane segment spans residues G217–L234. Residues L235–L240 are Extracellular-facing.

The protein belongs to the MtrA family. As to quaternary structure, the complex is composed of 8 subunits; MtrA, MtrB, MtrC, MtrD, MtrE, MtrF, MtrG and MtrH. Requires 5-hydroxybenzimidazolylcob(I)amide as cofactor.

It is found in the cell membrane. It carries out the reaction 5-methyl-5,6,7,8-tetrahydromethanopterin + coenzyme M + 2 Na(+)(in) = 5,6,7,8-tetrahydromethanopterin + methyl-coenzyme M + 2 Na(+)(out). It functions in the pathway one-carbon metabolism; methanogenesis from CO(2); methyl-coenzyme M from 5,10-methylene-5,6,7,8-tetrahydromethanopterin: step 2/2. Functionally, part of a complex that catalyzes the formation of methyl-coenzyme M and tetrahydromethanopterin from coenzyme M and methyl-tetrahydromethanopterin. This is an energy-conserving, sodium-ion translocating step. The sequence is that of Tetrahydromethanopterin S-methyltransferase subunit A from Methanococcus aeolicus (strain ATCC BAA-1280 / DSM 17508 / OCM 812 / Nankai-3).